Consider the following 436-residue polypeptide: 3-ketoacyl-CoA thiolase (436 aa).

Catalysis depends on Cys-99, which acts as the Acyl-thioester intermediate. Active-site proton acceptor residues include His-392 and Cys-422.

Belongs to the thiolase-like superfamily. Thiolase family. Heterotetramer of two alpha chains (FadJ) and two beta chains (FadI).

The protein resides in the cytoplasm. It catalyses the reaction an acyl-CoA + acetyl-CoA = a 3-oxoacyl-CoA + CoA. It participates in lipid metabolism; fatty acid beta-oxidation. Functionally, catalyzes the final step of fatty acid oxidation in which acetyl-CoA is released and the CoA ester of a fatty acid two carbons shorter is formed. The sequence is that of 3-ketoacyl-CoA thiolase from Shewanella piezotolerans (strain WP3 / JCM 13877).